We begin with the raw amino-acid sequence, 231 residues long: Large ribosomal subunit protein uL1 (231 aa).

It belongs to the universal ribosomal protein uL1 family. In terms of assembly, part of the 50S ribosomal subunit.

Functionally, binds directly to 23S rRNA. The L1 stalk is quite mobile in the ribosome, and is involved in E site tRNA release. In terms of biological role, protein L1 is also a translational repressor protein, it controls the translation of the L11 operon by binding to its mRNA. The polypeptide is Large ribosomal subunit protein uL1 (Mycoplasmopsis agalactiae (strain NCTC 10123 / CIP 59.7 / PG2) (Mycoplasma agalactiae)).